We begin with the raw amino-acid sequence, 82 residues long: Cytochrome c-551 (82 aa).

The heme c site is built by cysteine 12, cysteine 15, histidine 16, and methionine 61.

Binds 1 heme c group covalently per subunit.

In terms of biological role, this is a prokaryotic monoheme cytochrome, unreactive with mitochondrial cytochrome C oxidase or reductase. It functions in nitrite and nitrate respiration in Pseudomonas, but it is also found in other bacteria. The chain is Cytochrome c-551 from Pseudomonas denitrificans.